A 36-amino-acid chain; its full sequence is Kappa-actitoxin-Avd6a (36 aa).

Residues cysteine 2–cysteine 36 enclose the ShKT domain. 3 disulfide bridges follow: cysteine 2–cysteine 36, cysteine 11–cysteine 29, and cysteine 20–cysteine 33. The crucial for binding to potassium channels stretch occupies residues lysine 24–tyrosine 25.

It belongs to the sea anemone type 1 potassium channel toxin family. Type 1b subfamily.

The protein resides in the secreted. It is found in the nematocyst. Functionally, blocks voltage-gated potassium channels Kv1.2/KCNA2 (IC(50)=140 nM). This Anemonia sulcata (Mediterranean snakelocks sea anemone) protein is Kappa-actitoxin-Avd6a.